The following is a 429-amino-acid chain: Protein AST1 (429 aa).

Interacts with PMA1.

It is found in the cell membrane. The protein resides in the membrane raft. The protein localises to the golgi apparatus membrane. Its subcellular location is the late endosome membrane. Functionally, lipid raft-associated protein involved in the targeting of PMA1 from Golgi to the plasma membrane. May induce clustering of PMA1, which facilitates partition of PMA1 into lipid rafts after leaving the ER and its transport to the cell surface. The polypeptide is Protein AST1 (Saccharomyces cerevisiae (strain ATCC 204508 / S288c) (Baker's yeast)).